The following is a 735-amino-acid chain: E3 ubiquitin-protein ligase SH3RF2 (735 aa).

The segment at Cys-12–Arg-53 adopts an RING-type zinc-finger fold. SH3 domains are found at residues Asp-125–Gln-184 and Gln-187–Ser-252. Disordered stretches follow at residues Ser-260–Gln-301 and Thr-335–Met-373. Positions Leu-273 to Arg-289 are enriched in polar residues. The interaction with PAK4 stretch occupies residues Met-373–Ala-466. The SH3 3 domain occupies Leu-383 to Ser-444. Disordered stretches follow at residues Val-472–Ser-534, Glu-612–Asn-637, and Val-649–Lys-735. Residues Arg-523–Ser-534 are compositionally biased toward polar residues. Pro residues predominate over residues Ser-617 to Ala-627. The interval Lys-647 to Gln-652 is interaction with PPP1CA. Ser-655 bears the Phosphoserine mark. Polar residues predominate over residues Phe-715–Lys-735.

The protein belongs to the SH3RF family. Interacts with FASLG and PPP1CA. Interacts with PAK4 and TNFRSF1A. Interacts with DLK1, MAP3K10, MAPK8IP1/JIP1, MAPK8IP2/JIP2 and MAPK8IP3/JIP3. Interacts with RAC1 (both active GTP- or inactive GDP-bound forms). In terms of processing, autoubiquitinated.

It localises to the nucleus. The catalysed reaction is S-ubiquitinyl-[E2 ubiquitin-conjugating enzyme]-L-cysteine + [acceptor protein]-L-lysine = [E2 ubiquitin-conjugating enzyme]-L-cysteine + N(6)-ubiquitinyl-[acceptor protein]-L-lysine.. The protein operates within protein modification; protein ubiquitination. In terms of biological role, has E3 ubiquitin-protein ligase activity. Acts as an anti-apoptotic regulator of the JNK pathway by ubiquitinating and promoting the degradation of SH3RF1, a scaffold protein that is required for pro-apoptotic JNK activation. Facilitates TNF-alpha-mediated recruitment of adapter proteins TRADD and RIPK1 to TNFRSF1A and regulates PAK4 protein stability via inhibition of its ubiquitin-mediated proteasomal degradation. Inhibits PPP1CA phosphatase activity. The sequence is that of E3 ubiquitin-protein ligase SH3RF2 (Sh3rf2) from Rattus norvegicus (Rat).